Consider the following 179-residue polypeptide: ATP synthase subunit b, chloroplastic (179 aa).

The chain crosses the membrane as a helical span at residues 28-46; that stretch reads LLNILALVAILVYTGKDFL.

The protein belongs to the ATPase B chain family. F-type ATPases have 2 components, F(1) - the catalytic core - and F(0) - the membrane proton channel. F(1) has five subunits: alpha(3), beta(3), gamma(1), delta(1), epsilon(1). F(0) has four main subunits: a(1), b(1), b'(1) and c(10-14). The alpha and beta chains form an alternating ring which encloses part of the gamma chain. F(1) is attached to F(0) by a central stalk formed by the gamma and epsilon chains, while a peripheral stalk is formed by the delta, b and b' chains.

It is found in the plastid. It localises to the chloroplast thylakoid membrane. Its function is as follows. F(1)F(0) ATP synthase produces ATP from ADP in the presence of a proton or sodium gradient. F-type ATPases consist of two structural domains, F(1) containing the extramembraneous catalytic core and F(0) containing the membrane proton channel, linked together by a central stalk and a peripheral stalk. During catalysis, ATP synthesis in the catalytic domain of F(1) is coupled via a rotary mechanism of the central stalk subunits to proton translocation. In terms of biological role, component of the F(0) channel, it forms part of the peripheral stalk, linking F(1) to F(0). This Thalassiosira pseudonana (Marine diatom) protein is ATP synthase subunit b, chloroplastic.